Consider the following 243-residue polypeptide: Adenosine 5'-phosphosulfate reductase (243 aa).

The [4Fe-4S] cluster site is built by C126, C127, C209, and C212. The active-site Nucleophile; cysteine thiosulfonate intermediate is the C235.

This sequence belongs to the PAPS reductase family. CysH subfamily. [4Fe-4S] cluster serves as cofactor.

It localises to the cytoplasm. It catalyses the reaction [thioredoxin]-disulfide + sulfite + AMP + 2 H(+) = adenosine 5'-phosphosulfate + [thioredoxin]-dithiol. The protein operates within sulfur metabolism; hydrogen sulfide biosynthesis; sulfite from sulfate. Its function is as follows. Catalyzes the formation of sulfite from adenosine 5'-phosphosulfate (APS) using thioredoxin as an electron donor. The protein is Adenosine 5'-phosphosulfate reductase of Staphylococcus epidermidis (strain ATCC 12228 / FDA PCI 1200).